A 380-amino-acid chain; its full sequence is Cytochrome b (380 aa).

The next 4 helical transmembrane spans lie at 34–54 (FGSLLGICLATQILTGLLLAA), 78–99 (WLIRNLHANGASFFFICIYLHI), 114–134 (WNTGVILLLTLMATAFVGYVL), and 179–199 (FFTLHFLLPFMIMGLTLIHLT). Positions 84 and 98 each coordinate heme b. Residues H183 and H197 each contribute to the heme b site. Residue H202 coordinates a ubiquinone. Helical transmembrane passes span 227–247 (LKDILGFMLMLFPLMTLALFS), 289–309 (LGGVLALAASVLILFLAPLLH), 321–341 (FSQLLFWTLAANLLILTWVGS), and 348–368 (FIIIGQLASLTYFTILLILFP).

It belongs to the cytochrome b family. In terms of assembly, the cytochrome bc1 complex contains 11 subunits: 3 respiratory subunits (MT-CYB, CYC1 and UQCRFS1), 2 core proteins (UQCRC1 and UQCRC2) and 6 low-molecular weight proteins (UQCRH/QCR6, UQCRB/QCR7, UQCRQ/QCR8, UQCR10/QCR9, UQCR11/QCR10 and a cleavage product of UQCRFS1). This cytochrome bc1 complex then forms a dimer. Requires heme b as cofactor.

It is found in the mitochondrion inner membrane. Component of the ubiquinol-cytochrome c reductase complex (complex III or cytochrome b-c1 complex) that is part of the mitochondrial respiratory chain. The b-c1 complex mediates electron transfer from ubiquinol to cytochrome c. Contributes to the generation of a proton gradient across the mitochondrial membrane that is then used for ATP synthesis. This Antigone vipio (White-naped crane) protein is Cytochrome b (MT-CYB).